A 1357-amino-acid chain; its full sequence is DNA-directed RNA polymerase subunit beta (1357 aa).

Belongs to the RNA polymerase beta chain family. The RNAP catalytic core consists of 2 alpha, 1 beta, 1 beta' and 1 omega subunit. When a sigma factor is associated with the core the holoenzyme is formed, which can initiate transcription.

The enzyme catalyses RNA(n) + a ribonucleoside 5'-triphosphate = RNA(n+1) + diphosphate. Functionally, DNA-dependent RNA polymerase catalyzes the transcription of DNA into RNA using the four ribonucleoside triphosphates as substrates. This is DNA-directed RNA polymerase subunit beta from Pseudomonas fluorescens (strain SBW25).